Consider the following 927-residue polypeptide: Tubulin monoglycylase TTLL3 (927 aa).

The segment covering 35–47 (RSQPSELRTNFSS) has biased composition (polar residues). Disordered regions lie at residues 35-113 (RSQP…PQPV) and 194-227 (HPPG…EENE). Residues 216–226 (DATEDEDEEEN) show a composition bias toward acidic residues. The 358-residue stretch at 345–702 (VLKLVVKLEE…DRRLDRSCDT (358 aa)) folds into the TTL domain. Residues lysine 476, 482–483 (RG), 514–517 (QKYI), 527–529 (KFD), and 571–572 (CN) each bind ATP. Arginine 482 provides a ligand contact to a protein. Residues aspartate 649, glutamate 662, and asparagine 664 each coordinate Mg(2+). Glutamate 662 contacts ATP. Disordered stretches follow at residues 735–799 (VPVG…SGKG) and 897–927 (EEGH…KTET). The segment covering 752-769 (LTQQGSGESKDSGSPTHR) has biased composition (polar residues). Residues 776 to 788 (ARAESLEHTEKPE) show a composition bias toward basic and acidic residues. Polar residues predominate over residues 916–927 (LSSTEPCSKTET).

It depends on Mg(2+) as a cofactor. In terms of tissue distribution, highly expressed in brain and testis. Expressed in heart, kidney, liver, lung, muscle, spleen, trachea and colon. Expressed in sperm flagellum. In the brain, specifically expressed in ependymal cilia.

It localises to the cytoplasm. It is found in the cytoskeleton. Its subcellular location is the cell projection. The protein resides in the cilium. The protein localises to the cilium axoneme. It localises to the flagellum axoneme. It catalyses the reaction L-glutamyl-[protein] + glycine + ATP = glycyl-L-glutamyl-[protein] + ADP + phosphate + H(+). Monoglycylase which modifies alpha- and beta-tubulin, adding a single glycine on the gamma-carboxyl groups of specific glutamate residues to generate monoglycine side chains within the C-terminal tail of tubulin. Not involved in elongation step of the polyglycylation reaction. Preferentially glycylates a beta-tail peptide over the alpha-tail, although shifts its preference toward alpha-tail as beta-tail glutamylation increases. Competes with polyglutamylases for modification site on beta-tubulin substrate, thereby creating an anticorrelation between glycylation and glutamylation reactions. Together with TTLL8, mediates microtubule glycylation of primary and motile cilia, which is essential for their stability and maintenance. Involved in microtubule glycylation of primary cilia in colon which controls cell proliferation of epithelial cells and plays an essential role in colon cancer development. Together with TTLL8, glycylates sperm flagella which regulates axonemal dynein motor activity, thereby controlling flagellar beat, directional sperm swimming and male fertility. This is Tubulin monoglycylase TTLL3 from Mus musculus (Mouse).